Reading from the N-terminus, the 69-residue chain is NADH dehydrogenase [ubiquinone] 1 beta subcomplex subunit 2 (69 aa).

Belongs to the complex I NDUFB2 subunit family. Complex I is composed of at least 49 different subunits.

It localises to the mitochondrion inner membrane. Accessory subunit of the mitochondrial membrane respiratory chain NADH dehydrogenase (Complex I), that is believed not to be involved in catalysis. Complex I functions in the transfer of electrons from NADH to the respiratory chain. The immediate electron acceptor for the enzyme is believed to be ubiquinone. The sequence is that of NADH dehydrogenase [ubiquinone] 1 beta subcomplex subunit 2 from Arabidopsis thaliana (Mouse-ear cress).